The sequence spans 208 residues: Outer-membrane lipoprotein carrier protein (208 aa).

A signal peptide spans 1 to 25 (MKKLFSAKLFSALVLSFSLFSTAHA).

It belongs to the LolA family. In terms of assembly, monomer.

The protein resides in the periplasm. In terms of biological role, participates in the translocation of lipoproteins from the inner membrane to the outer membrane. Only forms a complex with a lipoprotein if the residue after the N-terminal Cys is not an aspartate (The Asp acts as a targeting signal to indicate that the lipoprotein should stay in the inner membrane). In Vibrio campbellii (strain ATCC BAA-1116), this protein is Outer-membrane lipoprotein carrier protein.